Consider the following 260-residue polypeptide: Ribonuclease PH (260 aa).

Phosphate-binding positions include Arg88 and Gly126–Arg128.

It belongs to the RNase PH family. Homohexameric ring arranged as a trimer of dimers.

It catalyses the reaction tRNA(n+1) + phosphate = tRNA(n) + a ribonucleoside 5'-diphosphate. Its function is as follows. Phosphorolytic 3'-5' exoribonuclease that plays an important role in tRNA 3'-end maturation. Removes nucleotide residues following the 3'-CCA terminus of tRNAs; can also add nucleotides to the ends of RNA molecules by using nucleoside diphosphates as substrates, but this may not be physiologically important. Probably plays a role in initiation of 16S rRNA degradation (leading to ribosome degradation) during starvation. The sequence is that of Ribonuclease PH from Mycolicibacterium gilvum (strain PYR-GCK) (Mycobacterium gilvum (strain PYR-GCK)).